We begin with the raw amino-acid sequence, 545 residues long: CTP synthase (545 aa).

The interval 1-266 (MTTRYIFVTG…DDLVVKRFGL (266 aa)) is amidoligase domain. CTP is bound at residue Ser-14. Ser-14 contributes to the UTP binding site. ATP is bound by residues 15 to 20 (SLGKGI) and Asp-72. Mg(2+) contacts are provided by Asp-72 and Glu-140. CTP-binding positions include 147-149 (DIE), 187-192 (KTKPTQ), and Lys-223. Residues 187–192 (KTKPTQ) and Lys-223 each bind UTP. 239–241 (KDV) serves as a coordination point for ATP. Residues 291–542 (VIGMVGKYIE…IAAASAHQKR (252 aa)) form the Glutamine amidotransferase type-1 domain. Gly-352 serves as a coordination point for L-glutamine. Cys-379 (nucleophile; for glutamine hydrolysis) is an active-site residue. Residues 380-383 (LGMQ), Glu-403, and Arg-470 contribute to the L-glutamine site. Active-site residues include His-515 and Glu-517.

This sequence belongs to the CTP synthase family. As to quaternary structure, homotetramer.

It catalyses the reaction UTP + L-glutamine + ATP + H2O = CTP + L-glutamate + ADP + phosphate + 2 H(+). It carries out the reaction L-glutamine + H2O = L-glutamate + NH4(+). The enzyme catalyses UTP + NH4(+) + ATP = CTP + ADP + phosphate + 2 H(+). Its pathway is pyrimidine metabolism; CTP biosynthesis via de novo pathway; CTP from UDP: step 2/2. Allosterically activated by GTP, when glutamine is the substrate; GTP has no effect on the reaction when ammonia is the substrate. The allosteric effector GTP functions by stabilizing the protein conformation that binds the tetrahedral intermediate(s) formed during glutamine hydrolysis. Inhibited by the product CTP, via allosteric rather than competitive inhibition. Its function is as follows. Catalyzes the ATP-dependent amination of UTP to CTP with either L-glutamine or ammonia as the source of nitrogen. Regulates intracellular CTP levels through interactions with the four ribonucleotide triphosphates. The chain is CTP synthase from Shewanella baltica (strain OS155 / ATCC BAA-1091).